Reading from the N-terminus, the 130-residue chain is Prefoldin subunit alpha (130 aa).

The protein belongs to the prefoldin subunit alpha family. Heterohexamer of two alpha and four beta subunits.

The protein resides in the cytoplasm. Its function is as follows. Molecular chaperone capable of stabilizing a range of proteins. Seems to fulfill an ATP-independent, HSP70-like function in archaeal de novo protein folding. In Thermoplasma volcanium (strain ATCC 51530 / DSM 4299 / JCM 9571 / NBRC 15438 / GSS1), this protein is Prefoldin subunit alpha.